The following is a 122-amino-acid chain: Large ribosomal subunit protein uL22 (122 aa).

Belongs to the universal ribosomal protein uL22 family. As to quaternary structure, part of the 50S ribosomal subunit.

Functionally, this protein binds specifically to 23S rRNA; its binding is stimulated by other ribosomal proteins, e.g. L4, L17, and L20. It is important during the early stages of 50S assembly. It makes multiple contacts with different domains of the 23S rRNA in the assembled 50S subunit and ribosome. In terms of biological role, the globular domain of the protein is located near the polypeptide exit tunnel on the outside of the subunit, while an extended beta-hairpin is found that lines the wall of the exit tunnel in the center of the 70S ribosome. The sequence is that of Large ribosomal subunit protein uL22 from Prochlorococcus marinus (strain MIT 9303).